The following is a 340-amino-acid chain: Heat-inducible transcription repressor HrcA (340 aa).

The protein belongs to the HrcA family.

Its function is as follows. Negative regulator of class I heat shock genes (grpE-dnaK-dnaJ and groELS operons). Prevents heat-shock induction of these operons. This chain is Heat-inducible transcription repressor HrcA, found in Burkholderia cenocepacia (strain HI2424).